The sequence spans 245 residues: Probable transcriptional regulatory protein MARTH_orf271 (245 aa).

This sequence belongs to the TACO1 family.

The protein resides in the cytoplasm. In Metamycoplasma arthritidis (strain 158L3-1) (Mycoplasma arthritidis), this protein is Probable transcriptional regulatory protein MARTH_orf271.